Reading from the N-terminus, the 83-residue chain is MVTIRLARGGAKKRPFYNIVVADSRNARDGRFIERVGFFNPVARGQEEALRLDLDRVEHWVANGAATTDRVAKLIKDARKAAA.

The protein belongs to the bacterial ribosomal protein bS16 family.

The protein is Small ribosomal subunit protein bS16 of Shewanella halifaxensis (strain HAW-EB4).